We begin with the raw amino-acid sequence, 100 residues long: Urease subunit gamma (100 aa).

Belongs to the urease gamma subunit family. Heterotrimer of UreA (gamma), UreB (beta) and UreC (alpha) subunits. Three heterotrimers associate to form the active enzyme.

Its subcellular location is the cytoplasm. The catalysed reaction is urea + 2 H2O + H(+) = hydrogencarbonate + 2 NH4(+). It participates in nitrogen metabolism; urea degradation; CO(2) and NH(3) from urea (urease route): step 1/1. The sequence is that of Urease subunit gamma from Frankia alni (strain DSM 45986 / CECT 9034 / ACN14a).